A 190-amino-acid chain; its full sequence is LOB domain-containing protein 1 (190 aa).

The span at 1–11 (MESKSDASVAT) shows a compositional bias: polar residues. The tract at residues 1-27 (MESKSDASVATTPIISSSSSPPPSLSP) is disordered. An LOB domain is found at 32–133 (SPCAACKILR…AQLAKAQVEM (102 aa)).

The protein belongs to the LOB domain-containing protein family. As to expression, expressed in young shoots, roots, stems, leaves and flowers.

This chain is LOB domain-containing protein 1 (LBD1), found in Arabidopsis thaliana (Mouse-ear cress).